A 90-amino-acid polypeptide reads, in one-letter code: UPF0297 protein Cthe_0151 (90 aa).

The protein belongs to the UPF0297 family.

In Acetivibrio thermocellus (strain ATCC 27405 / DSM 1237 / JCM 9322 / NBRC 103400 / NCIMB 10682 / NRRL B-4536 / VPI 7372) (Clostridium thermocellum), this protein is UPF0297 protein Cthe_0151.